Reading from the N-terminus, the 1176-residue chain is Myosin light chain kinase, smooth muscle (1176 aa).

The segment at 1 to 41 is actin-binding (calcium/calmodulin-sensitive); it reads MDFRANLQRQVKPKTLSEEERKVHGPQQVDFRSVLAKKGTP. Residues 1-354 form a disordered region; the sequence is MDFRANLQRQ…SEKRPESRGT (354 aa). Residues 26–41 are calmodulin-binding; that stretch reads PQQVDFRSVLAKKGTP. The segment covering 43 to 55 has biased composition (pro residues); it reads TPVPEKVPPPKPA. Tandem repeats lie at residues 100 to 111, 112 to 123, 124 to 135, 136 to 147, 148 to 159, 160 to 171, 172 to 183, 184 to 195, 196 to 207, 208 to 219, 220 to 231, 232 to 243, 244 to 255, 256 to 267, 268 to 279, and 280 to 291. The tract at residues 100–291 is 16 X 12 AA tandem repeats; sequence FLKPVGNAKL…KLVGNAKPAE (192 aa). At S202 the chain carries Phosphoserine. Residues 319 to 721 form an actin-binding (calcium/calmodulin-insensitive) region; sequence PTGKEELKKE…TVTVNTEQKV (403 aa). Positions 320–335 are enriched in basic and acidic residues; sequence TGKEELKKEIKNDVNC. The Ig-like C2-type 1 domain maps to 356–444; the sequence is PTFEEKLQDL…GQAESSCQVT (89 aa). The cysteines at positions 377 and 428 are disulfide-linked. The disordered stretch occupies residues 448 to 497; that stretch reads PDAPTSENAKAPEMKARRPKSSLPPVLGTESDATVKKKPAPKTPPKAAMP. One can recognise an Ig-like C2-type 2 domain in the interval 498 to 586; the sequence is PQIIQFPEDQ…GSRQAQVNLT (89 aa). The 93-residue stretch at 594–686 folds into the Fibronectin type-III domain; sequence PAGTPCASDI…QESELTALGE (93 aa). The segment at 673-707 is disordered; that stretch reads SEPSQESELTALGEKPEEEPKDEVEVSDDDEKEPE. Residues 688–706 show a composition bias toward acidic residues; the sequence is PEEEPKDEVEVSDDDEKEP. S699 is subject to Phosphoserine. The residue at position 710 (Y710) is a Phosphotyrosine; by ABL1. The Protein kinase domain occupies 725–980; the sequence is YDIEERLGSG…CTQCLQHPWL (256 aa). ATP is bound by residues 731-739 and K754; that span reads LGSGKFGQV. Residue Y836 is modified to Phosphotyrosine; by ABL1. D846 acts as the Proton acceptor in catalysis. A Phosphotyrosine; by ABL1 modification is found at Y896. The segment at 972–1035 is calmodulin-binding; it reads TQCLQHPWLM…SGLSGRKSST (64 aa). 5 positions are modified to phosphoserine: S1020, S1021, S1033, S1034, and S1037. Position 1039 is a phosphothreonine (T1039). S1040 is modified (phosphoserine). One can recognise an Ig-like C2-type 3 domain in the interval 1069 to 1158; that stretch reads PYFSKTIRDL…GEATCTAELI (90 aa). C1090 and C1142 are oxidised to a cystine.

The protein belongs to the protein kinase superfamily. CAMK Ser/Thr protein kinase family. As to quaternary structure, all isoforms including Telokin bind calmodulin. Interacts with SVIL. Interacts with CTTN; this interaction is reduced during thrombin-induced endothelial cell (EC) contraction but is promoted by the barrier-protective agonist sphingosine 1-phosphate (S1P) within lamellipodia. A complex made of ABL1, CTTN and MYLK regulates cortical actin-based cytoskeletal rearrangement critical to sphingosine 1-phosphate (S1P)-mediated endothelial cell (EC) barrier enhancement. Binds to NAA10/ARD1 and PTK2B/PYK2. Mg(2+) serves as cofactor. The cofactor is Ca(2+). The C-terminus is deglutamylated by AGTPBP1/CCP1, AGBL1/CCP4 and AGBL4/CCP6, leading to the formation of Myosin light chain kinase, smooth muscle, deglutamylated form. The consequences of C-terminal deglutamylation are unknown. In terms of processing, can probably be down-regulated by phosphorylation. Tyrosine phosphorylation by ABL1 increases kinase activity, reverses MLCK-mediated inhibition of Arp2/3-mediated actin polymerization, and enhances CTTN-binding. Phosphorylation by SRC promotes CTTN binding.

Its subcellular location is the cytoplasm. The protein localises to the cell projection. It localises to the lamellipodium. The protein resides in the cleavage furrow. It is found in the cytoskeleton. Its subcellular location is the stress fiber. It catalyses the reaction L-seryl-[myosin light chain] + ATP = O-phospho-L-seryl-[myosin light chain] + ADP + H(+). It carries out the reaction L-threonyl-[myosin light chain] + ATP = O-phospho-L-threonyl-[myosin light chain] + ADP + H(+). In terms of biological role, calcium/calmodulin-dependent myosin light chain kinase implicated in smooth muscle contraction via phosphorylation of myosin light chains (MLC). Also regulates actin-myosin interaction through a non-kinase activity. Phosphorylates PTK2B/PYK2 and myosin light-chains. Involved in the inflammatory response (e.g. apoptosis, vascular permeability, leukocyte diapedesis), cell motility and morphology, airway hyperreactivity and other activities relevant to asthma. Required for tonic airway smooth muscle contraction that is necessary for physiological and asthmatic airway resistance. Necessary for gastrointestinal motility. Implicated in the regulation of endothelial as well as vascular permeability, probably via the regulation of cytoskeletal rearrangements. In the nervous system it has been shown to control the growth initiation of astrocytic processes in culture and to participate in transmitter release at synapses formed between cultured sympathetic ganglion cells. Critical participant in signaling sequences that result in fibroblast apoptosis. Plays a role in the regulation of epithelial cell survival. Required for epithelial wound healing, especially during actomyosin ring contraction during purse-string wound closure. Mediates RhoA-dependent membrane blebbing. Triggers TRPC5 channel activity in a calcium-dependent signaling, by inducing its subcellular localization at the plasma membrane. Promotes cell migration (including tumor cells) and tumor metastasis. PTK2B/PYK2 activation by phosphorylation mediates ITGB2 activation and is thus essential to trigger neutrophil transmigration during acute lung injury (ALI). May regulate optic nerve head astrocyte migration. Probably involved in mitotic cytoskeletal regulation. Regulates tight junction probably by modulating ZO-1 exchange in the perijunctional actomyosin ring. Mediates burn-induced microvascular barrier injury; triggers endothelial contraction in the development of microvascular hyperpermeability by phosphorylating MLC. Essential for intestinal barrier dysfunction. Mediates Giardia spp.-mediated reduced epithelial barrier function during giardiasis intestinal infection via reorganization of cytoskeletal F-actin and tight junctional ZO-1. Necessary for hypotonicity-induced Ca(2+) entry and subsequent activation of volume-sensitive organic osmolyte/anion channels (VSOAC) in cervical cancer cells. The chain is Myosin light chain kinase, smooth muscle (MYLK) from Bos taurus (Bovine).